A 519-amino-acid chain; its full sequence is Berghepain-1 (519 aa).

At 1–32 (MINDIRRINITTSSIESLNENSKYLKRNHKRT) the chain is on the cytoplasmic side. The helical; Signal-anchor for type II membrane protein transmembrane segment at 33 to 53 (IKICAYAITTFALFFIVVVYF) threads the bilayer. The Lumenal segment spans residues 54–519 (KNQTNVNDAN…IGIDVFFPIL (466 aa)). 2 N-linked (GlcNAc...) asparagine glycosylation sites follow: asparagine 55 and asparagine 143. Disulfide bonds link cysteine 298–cysteine 340, cysteine 333–cysteine 373, cysteine 358–cysteine 378, and cysteine 427–cysteine 508. Residue cysteine 301 is part of the active site. Asparagine 432 carries an N-linked (GlcNAc...) asparagine glycan. Residues histidine 433 and asparagine 483 contribute to the active site.

This sequence belongs to the peptidase C1 family.

Its subcellular location is the membrane. In terms of biological role, cysteine protease. Required for host hepatocyte-derived merozoite infectivity and to a lesser extent for host erythrocyte-derived merozoite infectivity. The polypeptide is Berghepain-1 (Plasmodium berghei (strain Anka)).